Consider the following 54-residue polypeptide: Ribulose bisphosphate carboxylase large chain (54 aa).

Positions 1–2 are excised as a propeptide; it reads MS. At Pro-3 the chain carries N-acetylproline. Lys-14 bears the N6,N6,N6-trimethyllysine mark.

It belongs to the RuBisCO large chain family. Type I subfamily. In terms of assembly, heterohexadecamer of 8 large chains and 8 small chains.

Its subcellular location is the plastid. The protein resides in the chloroplast. The catalysed reaction is 2 (2R)-3-phosphoglycerate + 2 H(+) = D-ribulose 1,5-bisphosphate + CO2 + H2O. It carries out the reaction D-ribulose 1,5-bisphosphate + O2 = 2-phosphoglycolate + (2R)-3-phosphoglycerate + 2 H(+). Its function is as follows. RuBisCO catalyzes two reactions: the carboxylation of D-ribulose 1,5-bisphosphate, the primary event in carbon dioxide fixation, as well as the oxidative fragmentation of the pentose substrate in the photorespiration process. Both reactions occur simultaneously and in competition at the same active site. The protein is Ribulose bisphosphate carboxylase large chain (rbcL) of Geum borisii (Avens).